Consider the following 519-residue polypeptide: uncharacterized protein (519 aa).

13 helical membrane passes run Phe-19–Thr-39, Val-42–Ile-62, Met-87–Gly-107, Leu-128–Val-148, Val-179–Ala-199, Phe-220–Ala-240, Leu-270–Ala-290, Val-311–Ile-331, Trp-345–Ile-365, Ile-386–Thr-406, Phe-413–Leu-433, Leu-475–Thr-495, and Tyr-496–Val-516.

The protein localises to the cell membrane. This is an uncharacterized protein from Haemophilus influenzae (strain ATCC 51907 / DSM 11121 / KW20 / Rd).